A 243-amino-acid polypeptide reads, in one-letter code: Uridylate kinase (243 aa).

12 to 15 (KLSG) is an ATP binding site. Residues 20-25 (GAKGFG) form an involved in allosteric activation by GTP region. ATP is bound by residues glycine 55 and arginine 59. Residues aspartate 74 and 135 to 142 (TGNPYFTT) each bind UMP. ATP is bound by residues glutamine 163, tyrosine 169, and aspartate 172.

This sequence belongs to the UMP kinase family. As to quaternary structure, homohexamer.

The protein localises to the cytoplasm. The catalysed reaction is UMP + ATP = UDP + ADP. Its pathway is pyrimidine metabolism; CTP biosynthesis via de novo pathway; UDP from UMP (UMPK route): step 1/1. With respect to regulation, allosterically activated by GTP. Inhibited by UTP. Its function is as follows. Catalyzes the reversible phosphorylation of UMP to UDP. This is Uridylate kinase from Symbiobacterium thermophilum (strain DSM 24528 / JCM 14929 / IAM 14863 / T).